The chain runs to 158 residues: Transcription elongation factor GreA (158 aa).

A coiled-coil region spans residues 45 to 72 (AEYHAAREQQSFIEGRIKQLEGELSHAE).

Belongs to the GreA/GreB family.

Functionally, necessary for efficient RNA polymerase transcription elongation past template-encoded arresting sites. The arresting sites in DNA have the property of trapping a certain fraction of elongating RNA polymerases that pass through, resulting in locked ternary complexes. Cleavage of the nascent transcript by cleavage factors such as GreA or GreB allows the resumption of elongation from the new 3'terminus. GreA releases sequences of 2 to 3 nucleotides. In Xylella fastidiosa (strain M23), this protein is Transcription elongation factor GreA.